Consider the following 189-residue polypeptide: Glutathione-dependent formaldehyde-activating enzyme (189 aa).

One can recognise a CENP-V/GFA domain in the interval 20–166 (FAGGTLVCAC…LRTIGLEPYD (147 aa)). Zn(2+) contacts are provided by C27, C29, C48, C50, C53, C95, and C98.

The protein belongs to the Gfa family. The cofactor is Zn(2+).

The catalysed reaction is S-(hydroxymethyl)glutathione = glutathione + formaldehyde. It participates in one-carbon metabolism; formaldehyde degradation; formate from formaldehyde (glutathione route): step 1/3. Its function is as follows. Catalyzes the condensation of formaldehyde and glutathione to S-hydroxymethylglutathione. The polypeptide is Glutathione-dependent formaldehyde-activating enzyme (Mesorhizobium japonicum (strain LMG 29417 / CECT 9101 / MAFF 303099) (Mesorhizobium loti (strain MAFF 303099))).